A 267-amino-acid polypeptide reads, in one-letter code: Phosphate import ATP-binding protein PstB (267 aa).

An ABC transporter domain is found at 21-262; sequence IEVKNLNFYY…PREKRTQDYI (242 aa). 53–60 contributes to the ATP binding site; the sequence is GPSGCGKS.

This sequence belongs to the ABC transporter superfamily. Phosphate importer (TC 3.A.1.7) family. The complex is composed of two ATP-binding proteins (PstB), two transmembrane proteins (PstC and PstA) and a solute-binding protein (PstS).

Its subcellular location is the cell inner membrane. It carries out the reaction phosphate(out) + ATP + H2O = ADP + 2 phosphate(in) + H(+). Part of the ABC transporter complex PstSACB involved in phosphate import. Responsible for energy coupling to the transport system. In Mesorhizobium japonicum (strain LMG 29417 / CECT 9101 / MAFF 303099) (Mesorhizobium loti (strain MAFF 303099)), this protein is Phosphate import ATP-binding protein PstB.